We begin with the raw amino-acid sequence, 388 residues long: G2/mitotic-specific cyclin-B (388 aa).

This sequence belongs to the cyclin family. Cyclin AB subfamily. Interacts with the CDK1 protein kinase to form a serine/threonine kinase holoenzyme complex also known as maturation promoting factor (MPF). The cyclin subunit imparts substrate specificity to the complex.

Its function is as follows. Essential for the control of the cell cycle at the G2/M (mitosis) transition. In Marthasterias glacialis (Spiny starfish), this protein is G2/mitotic-specific cyclin-B.